The primary structure comprises 962 residues: Phenylalanine--tRNA ligase beta subunit (962 aa).

The region spanning 85–201 (TIRWCKVRVC…AEVFQGDELS (117 aa)) is the tRNA-binding domain. Residues 456–538 (TQQSPILLST…RVIGFNRIPS (83 aa)) enclose the B5 domain. Residues Asp516, Asp522, Glu525, and Glu526 each coordinate Mg(2+). The interval 621–675 (PDSTHNPDSGSDPIIPTGVTRITEPGSSGVSGPGNVGVKEKCSADTSIEHAPTTR) is insert. Positions 870 to 961 (PTSPAATQHL…ASSKFGAIMR (92 aa)) constitute an FDX-ACB domain.

This sequence belongs to the phenylalanyl-tRNA synthetase beta subunit family. Type 1 subfamily. In terms of assembly, tetramer of two alpha and two beta subunits. Mg(2+) serves as cofactor.

The protein resides in the cytoplasm. It carries out the reaction tRNA(Phe) + L-phenylalanine + ATP = L-phenylalanyl-tRNA(Phe) + AMP + diphosphate + H(+). In Tropheryma whipplei (strain Twist) (Whipple's bacillus), this protein is Phenylalanine--tRNA ligase beta subunit.